Reading from the N-terminus, the 345-residue chain is MKPDDCLNNIHIETENLDEVDLTKLTGEAHSLSNGIVPPFTDKTFRKATSFKQKCATYVLALRPWSFSASLIPVALGTAIAYRSGGSLDLLLFVVCAVAVLAVHGAGNLVNTYYDFSKGIDHKKSDDRTLVDHILEPQDVVRFGVFLYTLGCLCAACLYFISKLKLEHLALIYFGGLSSSFLYTGGIGFKYVALGDLVILITFGPLAVMFAHAVQVGYLAVTPLLYAVPLALSTEAILHSNNTRDMESDRQAGIVTLAILVGPMFSYMLYNLLVFLPYLIFSILATRYTISMALPLLTIPLAFSLERQFRSQNFNKIPQRTAKLNLLVGLFYVFGIVLAPAGSLP.

The next 8 helical transmembrane spans lie at 60-80, 90-110, 141-161, 169-189, 213-233, 251-273, 285-305, and 324-344; these read LALR…GTAI, LLLF…GNLV, VRFG…LYFI, LALI…GIGF, AVQV…LALS, QAGI…YNLL, ATRY…AFSL, and LNLL…AGSL.

It belongs to the UbiA prenyltransferase family.

The protein localises to the endoplasmic reticulum membrane. Its subcellular location is the golgi apparatus membrane. It localises to the mitochondrion membrane. It catalyses the reaction menadiol + (2E,6E,10E)-geranylgeranyl diphosphate = menaquinol-4 + diphosphate. The enzyme catalyses all-trans-decaprenyl diphosphate + 4-hydroxybenzoate = 4-hydroxy-3-(all-trans-decaprenyl)benzoate + diphosphate. The protein operates within quinol/quinone metabolism; menaquinone biosynthesis. Its pathway is cofactor biosynthesis; ubiquinone biosynthesis. Functionally, prenyltransferase that mediates the formation of menaquinone-4 (MK-4) and coenzyme Q10. MK-4 is a vitamin K2 isoform required for endothelial cell development. Mediates the conversion of phylloquinone (PK) into MK-4, probably by cleaving the side chain of phylloquinone (PK) to release 2-methyl-1,4-naphthoquinone (menadione; K3) and then prenylating it with geranylgeranyl pyrophosphate (GGPP) to form MK-4. Also plays a role in cardiovascular development independently of MK-4 biosynthesis, by acting as a coenzyme Q10 biosynthetic enzyme: coenzyme Q10, also named ubiquinone, plays an important antioxidant role in the cardiovascular system. Mediates biosynthesis of coenzyme Q10 in the Golgi membrane, leading to protect cardiovascular tissues from NOS3/eNOS-dependent oxidative stress. This chain is UbiA prenyltransferase domain-containing protein 1 (ubiad1), found in Xenopus tropicalis (Western clawed frog).